The chain runs to 453 residues: Argininosuccinate lyase (453 aa).

This sequence belongs to the lyase 1 family. Argininosuccinate lyase subfamily.

The protein localises to the cytoplasm. The catalysed reaction is 2-(N(omega)-L-arginino)succinate = fumarate + L-arginine. It participates in amino-acid biosynthesis; L-arginine biosynthesis; L-arginine from L-ornithine and carbamoyl phosphate: step 3/3. The protein is Argininosuccinate lyase of Shewanella loihica (strain ATCC BAA-1088 / PV-4).